Here is a 342-residue protein sequence, read N- to C-terminus: Serine/threonine-protein kinase ISR1 (342 aa).

The Protein kinase domain maps to 59–342 (WRLTRVLGCG…SNARVAEHAF (284 aa)). ATP-binding positions include 65-73 (LGCGSVACV) and Lys84. Asp190 serves as the catalytic Proton acceptor.

The protein belongs to the protein kinase superfamily. Ser/Thr protein kinase family.

It catalyses the reaction L-seryl-[protein] + ATP = O-phospho-L-seryl-[protein] + ADP + H(+). It carries out the reaction L-threonyl-[protein] + ATP = O-phospho-L-threonyl-[protein] + ADP + H(+). Probable serine/threonine protein kinase which may function redundantly with MPK1-independent branch of the PCK1 pathway. This Eremothecium gossypii (strain ATCC 10895 / CBS 109.51 / FGSC 9923 / NRRL Y-1056) (Yeast) protein is Serine/threonine-protein kinase ISR1 (ISR1).